The chain runs to 60 residues: Large ribosomal subunit protein uL29 (60 aa).

The protein belongs to the universal ribosomal protein uL29 family.

This Fusobacterium nucleatum subsp. nucleatum (strain ATCC 25586 / DSM 15643 / BCRC 10681 / CIP 101130 / JCM 8532 / KCTC 2640 / LMG 13131 / VPI 4355) protein is Large ribosomal subunit protein uL29.